The chain runs to 378 residues: Chaperone protein DnaJ (378 aa).

In terms of domain architecture, J spans D5–G70. The segment at G133–N211 adopts a CR-type zinc-finger fold. Positions 146, 149, 163, 166, 185, 188, 199, and 202 each coordinate Zn(2+). CXXCXGXG motif repeat units lie at residues C146 to G153, C163 to G170, C185 to G192, and C199 to G206.

This sequence belongs to the DnaJ family. Homodimer. Zn(2+) is required as a cofactor.

The protein localises to the cytoplasm. Participates actively in the response to hyperosmotic and heat shock by preventing the aggregation of stress-denatured proteins and by disaggregating proteins, also in an autonomous, DnaK-independent fashion. Unfolded proteins bind initially to DnaJ; upon interaction with the DnaJ-bound protein, DnaK hydrolyzes its bound ATP, resulting in the formation of a stable complex. GrpE releases ADP from DnaK; ATP binding to DnaK triggers the release of the substrate protein, thus completing the reaction cycle. Several rounds of ATP-dependent interactions between DnaJ, DnaK and GrpE are required for fully efficient folding. Also involved, together with DnaK and GrpE, in the DNA replication of plasmids through activation of initiation proteins. This Buchnera aphidicola subsp. Schizaphis graminum (strain Sg) protein is Chaperone protein DnaJ.